A 261-amino-acid chain; its full sequence is Small ribosomal subunit protein mS23 (261 aa).

Residues 228–261 form a disordered region; it reads EQRAAAFTGAPEIPSTEDSLGLEEGVEEKQPQQA.

The protein belongs to the mitochondrion-specific ribosomal protein mS23 family. Component of the mitochondrial small ribosomal subunit.

The protein localises to the mitochondrion. In Aspergillus oryzae (strain ATCC 42149 / RIB 40) (Yellow koji mold), this protein is Small ribosomal subunit protein mS23 (rsm25).